The chain runs to 163 residues: Transmembrane protein 278 (163 aa).

The interval 1–37 (MSEQGRETEEEEGGGGASDTAPMLPRGPPDHQASALT) is disordered. The next 2 helical transmembrane spans lie at 51 to 71 (LLAG…LVLL) and 105 to 125 (AALI…ASAV). Residues 136-148 (LLPPPAGTPGPRR) are compositionally biased toward pro residues. Residues 136–156 (LLPPPAGTPGPRRPPGRPDED) are disordered.

It belongs to the TMEM88 family.

The protein localises to the membrane. In Homo sapiens (Human), this protein is Transmembrane protein 278.